The following is a 345-amino-acid chain: S-adenosylmethionine:tRNA ribosyltransferase-isomerase (345 aa).

The protein belongs to the QueA family. As to quaternary structure, monomer.

The protein resides in the cytoplasm. It catalyses the reaction 7-aminomethyl-7-carbaguanosine(34) in tRNA + S-adenosyl-L-methionine = epoxyqueuosine(34) in tRNA + adenine + L-methionine + 2 H(+). It participates in tRNA modification; tRNA-queuosine biosynthesis. Functionally, transfers and isomerizes the ribose moiety from AdoMet to the 7-aminomethyl group of 7-deazaguanine (preQ1-tRNA) to give epoxyqueuosine (oQ-tRNA). This is S-adenosylmethionine:tRNA ribosyltransferase-isomerase from Shewanella sp. (strain ANA-3).